Reading from the N-terminus, the 208-residue chain is Large ribosomal subunit protein bL9 (208 aa).

Positions 168-208 are disordered; the sequence is GKVEKGSCTEGESLELGSVDNDINSGNVDSNESEKQDSVSE. Polar residues predominate over residues 188 to 197; the sequence is NDINSGNVDS. Residues 199–208 show a composition bias toward basic and acidic residues; sequence ESEKQDSVSE.

It belongs to the bacterial ribosomal protein bL9 family.

Functionally, binds to the 23S rRNA. This Ehrlichia chaffeensis (strain ATCC CRL-10679 / Arkansas) protein is Large ribosomal subunit protein bL9.